The chain runs to 219 residues: Transmembrane protein 17B (219 aa).

The N-linked (GlcNAc...) asparagine glycan is linked to Asn26. 4 consecutive transmembrane segments (helical) span residues 51-71 (MMLYFNAFFFPFWIISEIITM), 84-104 (ILLTTSLVILTLVESLRLYIG), 116-136 (LAGFLILTLLIQLPLLLFLLT), and 147-167 (LAVHMIYLMFINAEIVISFLV). Residues Asn195 and Asn203 are each glycosylated (N-linked (GlcNAc...) asparagine).

This sequence belongs to the TMEM17 family. In terms of assembly, part of the tectonic-like complex (also named B9 complex).

Its subcellular location is the cell projection. It localises to the cilium membrane. Functionally, transmembrane component of the tectonic-like complex, a complex localized at the transition zone of primary cilia and acting as a barrier that prevents diffusion of transmembrane proteins between the cilia and plasma membranes. Required for ciliogenesis and sonic hedgehog/SHH signaling. The polypeptide is Transmembrane protein 17B (Tmem17-b) (Xenopus tropicalis (Western clawed frog)).